The sequence spans 260 residues: 1-(5-phosphoribosyl)-5-[(5-phosphoribosylamino)methylideneamino] imidazole-4-carboxamide isomerase (260 aa).

Asp8 functions as the Proton acceptor in the catalytic mechanism. Residue Asp130 is the Proton donor of the active site.

It belongs to the HisA/HisF family.

The protein resides in the cytoplasm. The enzyme catalyses 1-(5-phospho-beta-D-ribosyl)-5-[(5-phospho-beta-D-ribosylamino)methylideneamino]imidazole-4-carboxamide = 5-[(5-phospho-1-deoxy-D-ribulos-1-ylimino)methylamino]-1-(5-phospho-beta-D-ribosyl)imidazole-4-carboxamide. Its pathway is amino-acid biosynthesis; L-histidine biosynthesis; L-histidine from 5-phospho-alpha-D-ribose 1-diphosphate: step 4/9. This chain is 1-(5-phosphoribosyl)-5-[(5-phosphoribosylamino)methylideneamino] imidazole-4-carboxamide isomerase, found in Chlorobium phaeobacteroides (strain BS1).